The chain runs to 365 residues: tRNA/tmRNA (uracil-C(5))-methyltransferase (365 aa).

Residues Gln189, Tyr217, Asn222, Glu238, and Asp298 each contribute to the S-adenosyl-L-methionine site. Catalysis depends on Cys323, which acts as the Nucleophile. Glu357 serves as the catalytic Proton acceptor.

This sequence belongs to the class I-like SAM-binding methyltransferase superfamily. RNA M5U methyltransferase family. TrmA subfamily.

The catalysed reaction is uridine(54) in tRNA + S-adenosyl-L-methionine = 5-methyluridine(54) in tRNA + S-adenosyl-L-homocysteine + H(+). It carries out the reaction uridine(341) in tmRNA + S-adenosyl-L-methionine = 5-methyluridine(341) in tmRNA + S-adenosyl-L-homocysteine + H(+). In terms of biological role, dual-specificity methyltransferase that catalyzes the formation of 5-methyluridine at position 54 (m5U54) in all tRNAs, and that of position 341 (m5U341) in tmRNA (transfer-mRNA). This is tRNA/tmRNA (uracil-C(5))-methyltransferase from Shewanella halifaxensis (strain HAW-EB4).